The primary structure comprises 299 residues: MAHRWINDLTPADITPRGAWMNRRQVMAGMAGAGLAAFAGSAQAETLEPNSWEEITSYNNFYEFGTGKDDPAAYAHLLKTVPWSIKIDGMVERPGDYDFQDILSEMTIEERIYRFRCVEAWSMVIPWNGFELADLLAMAGVQEGAKYVAFETLYRPEEMPGTRYPVLEWPYREGLRLDEAMHPLTLMATGIYGKPLPNQNGAPLRLVVPWKYGFKSIKSIVRITLTDREPPASWNMAIPNEYGFYSNVNPEVNHPRWSQASERRIGGGLFAKRQPTLMFNGYEKEVAGLYQGMDLAKYF.

The segment at residues 1–44 (MAHRWINDLTPADITPRGAWMNRRQVMAGMAGAGLAAFAGSAQA) is a signal peptide (tat-type signal). Mo-molybdopterin-binding positions include N59, 62 to 63 (YE), C117, T152, N200, R205, and 216 to 218 (SIK).

Belongs to the MsrP family. Heterodimer of a catalytic subunit (MsrP) and a heme-binding subunit (MsrQ). Mo-molybdopterin is required as a cofactor. Predicted to be exported by the Tat system. The position of the signal peptide cleavage has not been experimentally proven.

The protein localises to the periplasm. It carries out the reaction L-methionyl-[protein] + a quinone + H2O = L-methionyl-(S)-S-oxide-[protein] + a quinol. The enzyme catalyses L-methionyl-[protein] + a quinone + H2O = L-methionyl-(R)-S-oxide-[protein] + a quinol. Functionally, part of the MsrPQ system that repairs oxidized periplasmic proteins containing methionine sulfoxide residues (Met-O), using respiratory chain electrons. Thus protects these proteins from oxidative-stress damage caused by reactive species of oxygen and chlorine generated by the host defense mechanisms. MsrPQ is essential for the maintenance of envelope integrity under bleach stress, rescuing a wide series of structurally unrelated periplasmic proteins from methionine oxidation. The catalytic subunit MsrP is non-stereospecific, being able to reduce both (R-) and (S-) diastereoisomers of methionine sulfoxide. The polypeptide is Protein-methionine-sulfoxide reductase catalytic subunit MsrP (Ruegeria pomeroyi (strain ATCC 700808 / DSM 15171 / DSS-3) (Silicibacter pomeroyi)).